A 398-amino-acid chain; its full sequence is Ubiquitin-like modifier-activating enzyme 5 (398 aa).

The ATP site is built by glycine 76, aspartate 97, lysine 120, asparagine 143, and asparagine 177. Zn(2+) is bound by residues cysteine 219 and cysteine 222. The Glycyl thioester intermediate role is filled by cysteine 243. 2 residues coordinate Zn(2+): cysteine 296 and cysteine 301.

The protein belongs to the ubiquitin-activating E1 family. UBA5 subfamily.

In terms of biological role, E1-like enzyme which activates UFM1. In Drosophila grimshawi (Hawaiian fruit fly), this protein is Ubiquitin-like modifier-activating enzyme 5.